Reading from the N-terminus, the 505-residue chain is Gap junction alpha-10 protein (505 aa).

At 1 to 16 the chain is on the cytoplasmic side; that stretch reads MGDWNLLGGILEEVHS. Residues 17–37 form a helical membrane-spanning segment; that stretch reads HSTIVGKIWLTILFIFRMLVL. The Extracellular portion of the chain corresponds to 38–76; the sequence is GVAAEDVWDDEQSAFACNTQQPGCNNICYDDAFPISLIR. The helical transmembrane segment at 77 to 97 threads the bilayer; the sequence is FWVLQIIFVSSPSLVYMGHAL. Over 98 to 165 the chain is Cytoplasmic; that stretch reads YRLRDFEKQR…TYVLHILTRS (68 aa). The chain crosses the membrane as a helical span at residues 166–186; that stretch reads VLEVGFMIGQYILYGFQMHPI. The Extracellular portion of the chain corresponds to 187-209; that stretch reads YKCTQAPCPNSVDCFVSRPTEKT. A helical membrane pass occupies residues 210–230; that stretch reads IFMLFMHSIAAISLLLNILEI. The Cytoplasmic segment spans residues 231–505; it reads FHLGIRKIMR…IIHETYVYVY (275 aa). Positions 371–383 are enriched in polar residues; that stretch reads TMTASQHRPSSAL. Positions 371–491 are disordered; sequence TMTASQHRPS…SKSSHVDSPP (121 aa). Positions 437-446 are enriched in basic and acidic residues; it reads MSEKGQRHSD. A compositionally biased stretch (low complexity) spans 447–460; sequence SGSSRSLNSSCLDF.

It belongs to the connexin family. Alpha-type (group II) subfamily. A connexon is composed of a hexamer of connexins. Low levels were detected in skin, heart, kidney, testis, ovary, intestine. Expression not detected in brain, sciatic nerve or liver. According to PubMed:15147297 expression is detected only in horizontal cells in the inner nuclear layer of the retina and not in other neurons of the central nervous system or tissues. Detected in the outer plexiform layer of the retina (at protein level).

The protein localises to the cell membrane. It localises to the cell junction. The protein resides in the gap junction. Functionally, one gap junction consists of a cluster of closely packed pairs of transmembrane channels, the connexons, through which materials of low MW diffuse from one cell to a neighboring cell. Involved in tracer coupling between horizontal cells of the retina. May play a role in the regulation of horizontal cell patterning. This chain is Gap junction alpha-10 protein (Gja10), found in Mus musculus (Mouse).